Reading from the N-terminus, the 1952-residue chain is Protein ROS1A (1952 aa).

4 disordered regions span residues Glu72–Glu157, Ile693–Ser778, His1302–Val1334, and Leu1367–Lys1398. Composition is skewed to basic residues over residues Pro90–Lys102 and Gly130–Thr139. Composition is skewed to basic and acidic residues over residues Pro709–Glu720 and Leu727–Lys747. Polar residues predominate over residues Thr769–Ser778. A compositionally biased stretch (basic residues) spans Ala1388–Lys1398. [4Fe-4S] cluster is bound by residues Cys1582, Cys1589, Cys1592, and Cys1598.

Belongs to the DNA glycosylase family. DEMETER subfamily. The cofactor is [4Fe-4S] cluster. Expressed in roots, leaf blades, leaf sheaths, apical and lateral shoot meristems, inflorescence meristems, lodicules, pollen grains, ovules and seeds. Expressed in vascular tissues of roots and leaves, pollen grains, pericarp, aleurone, and starchy endosperm.

The protein resides in the nucleus. In terms of biological role, bifunctional DNA glycosylase/lyase, which excises 5-methylcytosine (5-meC) and 5-hydroxymethylcytosine (5-hmeC), leaving an apyrimidinic (AP) site that is subsequently incised by the lyase activity. DNA demethylase that is indispensable in both male and female gametophyte development. Involved in the regulation of DNA methylation in the promoters of RISBZ1/BZIP58 and DOF3/RPBF, two transcription factors that functions synergistically to positively regulate genes that are key players in the development of aleurone layers. Active DNA demethylation carried out by ROS1A in rice endosperms may restrict the number of aleurone cell layers. The polypeptide is Protein ROS1A (Oryza sativa subsp. japonica (Rice)).